Here is a 410-residue protein sequence, read N- to C-terminus: Lissencephaly-1 homolog (410 aa).

In terms of domain architecture, LisH spans 7 to 39 (QRDELNRAIADYLRSNGYEEAYSVFKKEAELDM). Residues 56–82 (TSVIRLQKKVMELESKLNEAKEEFTSG) adopt a coiled-coil conformation. 7 WD repeats span residues 106–147 (GHRS…RTLK), 148–189 (GHTD…RTMH), 190–229 (GHDH…CVKT), 232–271 (GHRE…CKAE), 274–333 (EHEH…CLMT), 336–377 (GHDN…KTLN), and 379–410 (HEHF…WECR).

Belongs to the WD repeat LIS1/nudF family. Can self-associate. Component of the cytosolic PAF-AH (I) heterotetrameric enzyme, which is composed of PAFAH1B1 (beta), PAFAH1B2 (alpha2) and PAFAH1B3 (alpha1) subunits. The catalytic activity of the enzyme resides in the alpha1 (PAFAH1B3) and alpha2 (PAFAH1B2) subunits, whereas the beta subunit (PAFAH1B1) has regulatory activity. Trimer formation is not essential for the catalytic activity. Interacts with dynein, dynactin, nde1 and ndel1.

The protein localises to the cytoplasm. It is found in the cytoskeleton. It localises to the microtubule organizing center. Its subcellular location is the centrosome. In terms of biological role, regulatory subunit (beta subunit) of the cytosolic type I platelet-activating factor (PAF) acetylhydrolase (PAF-AH (I)), an enzyme that catalyzes the hydrolyze of the acetyl group at the sn-2 position of PAF and its analogs and participates in PAF inactivation. Regulates the PAF-AH (I) activity in a catalytic dimer composition-dependent manner. Positively regulates the activity of the minus-end directed microtubule motor protein dynein. May enhance dynein-mediated microtubule sliding by targeting dynein to the microtubule plus end. Required for several dynein- and microtubule-dependent processes such as the maintenance of Golgi integrity, the peripheral transport of microtubule fragments and the coupling of the nucleus and centrosome. May be required for proliferation of neuronal precursors and neuronal migration. This is Lissencephaly-1 homolog (pafah1b1) from Xenopus laevis (African clawed frog).